We begin with the raw amino-acid sequence, 278 residues long: Diaminopimelate epimerase (278 aa).

3 residues coordinate substrate: asparagine 13, glutamine 49, and asparagine 68. The active-site Proton donor is the cysteine 77. Substrate contacts are provided by residues glycine 78–asparagine 79, asparagine 161, asparagine 194, and glutamate 212–arginine 213. Cysteine 221 functions as the Proton acceptor in the catalytic mechanism. Substrate is bound at residue glycine 222 to threonine 223.

The protein belongs to the diaminopimelate epimerase family. As to quaternary structure, homodimer.

Its subcellular location is the cytoplasm. The enzyme catalyses (2S,6S)-2,6-diaminopimelate = meso-2,6-diaminopimelate. The protein operates within amino-acid biosynthesis; L-lysine biosynthesis via DAP pathway; DL-2,6-diaminopimelate from LL-2,6-diaminopimelate: step 1/1. In terms of biological role, catalyzes the stereoinversion of LL-2,6-diaminopimelate (L,L-DAP) to meso-diaminopimelate (meso-DAP), a precursor of L-lysine and an essential component of the bacterial peptidoglycan. The protein is Diaminopimelate epimerase of Nitrosomonas eutropha (strain DSM 101675 / C91 / Nm57).